We begin with the raw amino-acid sequence, 437 residues long: Diaminopimelate decarboxylase (437 aa).

N6-(pyridoxal phosphate)lysine is present on lysine 81. Pyridoxal 5'-phosphate is bound by residues glycine 256 and 298–301; that span reads EPGR. Arginine 301, arginine 337, and tyrosine 341 together coordinate substrate. Cysteine 366 functions as the Proton donor in the catalytic mechanism. Substrate is bound by residues glutamate 367 and tyrosine 396. A pyridoxal 5'-phosphate-binding site is contributed by tyrosine 396.

The protein belongs to the Orn/Lys/Arg decarboxylase class-II family. LysA subfamily. In terms of assembly, homodimer. Pyridoxal 5'-phosphate serves as cofactor.

It catalyses the reaction meso-2,6-diaminopimelate + H(+) = L-lysine + CO2. It functions in the pathway amino-acid biosynthesis; L-lysine biosynthesis via DAP pathway; L-lysine from DL-2,6-diaminopimelate: step 1/1. In terms of biological role, specifically catalyzes the decarboxylation of meso-diaminopimelate (meso-DAP) to L-lysine. In Actinosynnema pretiosum subsp. auranticum, this protein is Diaminopimelate decarboxylase.